We begin with the raw amino-acid sequence, 68 residues long: Beta-defensin 1 (68 aa).

The signal sequence occupies residues 1–21; the sequence is MRTSYLLLFTLCLLLSEIASG. A propeptide spanning residues 22–32 is cleaved from the precursor; the sequence is GNFLTGLGHRS. 3 cysteine pairs are disulfide-bonded: cysteine 37/cysteine 66, cysteine 44/cysteine 59, and cysteine 49/cysteine 67.

Belongs to the beta-defensin family. Monomer. Homodimer.

The protein resides in the secreted. Its subcellular location is the membrane. Its function is as follows. Has bactericidal activity. May act as a ligand for C-C chemokine receptor CCR6. Positively regulates the sperm motility and bactericidal activity in a CCR6-dependent manner. Binds to CCR6 and triggers Ca2+ mobilization in the sperm which is important for its motility. This chain is Beta-defensin 1 (DEFB1), found in Gorilla gorilla gorilla (Western lowland gorilla).